Here is a 355-residue protein sequence, read N- to C-terminus: S-adenosylmethionine:tRNA ribosyltransferase-isomerase (355 aa).

Belongs to the QueA family. Monomer.

The protein localises to the cytoplasm. The catalysed reaction is 7-aminomethyl-7-carbaguanosine(34) in tRNA + S-adenosyl-L-methionine = epoxyqueuosine(34) in tRNA + adenine + L-methionine + 2 H(+). It functions in the pathway tRNA modification; tRNA-queuosine biosynthesis. Functionally, transfers and isomerizes the ribose moiety from AdoMet to the 7-aminomethyl group of 7-deazaguanine (preQ1-tRNA) to give epoxyqueuosine (oQ-tRNA). The chain is S-adenosylmethionine:tRNA ribosyltransferase-isomerase from Burkholderia orbicola (strain AU 1054).